Reading from the N-terminus, the 217-residue chain is MPKKFQSENTKSAAARARKAEAKAVADAKRKKETEDAFWQDDDKHVVRKEHRKEEKEKKRLELLERKKESQRLLDEEDSKMKGKPTKPAAPSKVTRAQIEETLCKEEKHKDAPEKPKTHLEIPLEENVNRRVLEEGEVEARTVEDAIAALSIGKELDRHPERRMKAAFTAFEEINMPLLKQENPNMRLSQLKQLLKKEWMKSPENPMNQKYATYNSH.

The disordered stretch occupies residues 1–123 (MPKKFQSENT…EKPKTHLEIP (123 aa)). Composition is skewed to basic and acidic residues over residues 18–45 (RKAEAKAVADAKRKKETEDAFWQDDDKH), 52–74 (RKEEKEKKRLELLERKKESQRLL), and 98–123 (QIEETLCKEEKHKDAPEKPKTHLEIP). Positions 41 to 83 (DDDKHVVRKEHRKEEKEKKRLELLERKKESQRLLDEEDSKMKG) form a coiled coil.

The protein belongs to the CCDC124 family. Associates with translationally inactive ribosomes in the nonrotated state.

The protein resides in the cytoplasm. It localises to the cytoskeleton. Its subcellular location is the microtubule organizing center. The protein localises to the centrosome. It is found in the midbody. In terms of biological role, ribosome-binding protein involved in ribosome hibernation: associates with translationally inactive ribosomes and stabilizes the nonrotated conformation of the 80S ribosome, thereby promoting ribosome preservation and storage. The sequence is that of Coiled-coil domain-containing protein 124-B (ccdc124-b) from Xenopus laevis (African clawed frog).